A 207-amino-acid polypeptide reads, in one-letter code: dITP/XTP pyrophosphatase (207 aa).

Substrate is bound at residue 7-12 (SNNAKK). Catalysis depends on D72, which acts as the Proton acceptor. D72 serves as a coordination point for Mg(2+). Residues S73, 155-158 (FGYD), K184, and 189-190 (HR) each bind substrate.

Belongs to the HAM1 NTPase family. In terms of assembly, homodimer. The cofactor is Mg(2+).

It carries out the reaction XTP + H2O = XMP + diphosphate + H(+). It catalyses the reaction dITP + H2O = dIMP + diphosphate + H(+). The enzyme catalyses ITP + H2O = IMP + diphosphate + H(+). In terms of biological role, pyrophosphatase that catalyzes the hydrolysis of nucleoside triphosphates to their monophosphate derivatives, with a high preference for the non-canonical purine nucleotides XTP (xanthosine triphosphate), dITP (deoxyinosine triphosphate) and ITP. Seems to function as a house-cleaning enzyme that removes non-canonical purine nucleotides from the nucleotide pool, thus preventing their incorporation into DNA/RNA and avoiding chromosomal lesions. The chain is dITP/XTP pyrophosphatase from Corynebacterium efficiens (strain DSM 44549 / YS-314 / AJ 12310 / JCM 11189 / NBRC 100395).